The following is a 995-amino-acid chain: tRNA wybutosine-synthesizing protein 2/3/4 (995 aa).

The tRNA wybutosine-synthesizing protein 3 homolog stretch occupies residues 1-212 (MDFEKRKAAT…GFSVALASNG (212 aa)). Kelch repeat units follow at residues 284–335 (EVIV…MVGD), 336–386 (FMFV…SVGT), 387–436 (KVYI…AYGS), 437–486 (QSFM…VYKH), and 488–535 (IGII…SILG). Positions 661–995 (ERSEENNLTK…RHLVADVRCR (335 aa)) are tRNA wybutosine-synthesizing protein 2 homolog. S-adenosyl-L-methionine-binding positions include lysine 828 and 896–897 (DN).

It in the C-terminal section; belongs to the class I-like SAM-binding methyltransferase superfamily. TRM5/TYW2 family. The protein in the N-terminal section; belongs to the TYW3 family.

The catalysed reaction is 4-demethyl-7-[(3S)-3-amino-3-carboxypropyl]wyosine(37) in tRNA(Phe) + S-adenosyl-L-methionine = 7-[(3S)-3-amino-3-carboxypropyl]wyosine(37) in tRNA(Phe) + S-adenosyl-L-homocysteine + H(+). The enzyme catalyses 4-demethylwyosine(37) in tRNA(Phe) + S-adenosyl-L-methionine = 4-demethyl-7-[(3S)-3-amino-3-carboxypropyl]wyosine(37) in tRNA(Phe) + S-methyl-5'-thioadenosine + H(+). Its pathway is tRNA modification; wybutosine-tRNA(Phe) biosynthesis. Functionally, S-adenosyl-L-methionine-dependent transferase that acts as a component of the wybutosine biosynthesis pathway. Wybutosine is a hyper modified guanosine with a tricyclic base found at the 3'-position adjacent to the anticodon of eukaryotic phenylalanine tRNA. The polypeptide is tRNA wybutosine-synthesizing protein 2/3/4 (Arabidopsis thaliana (Mouse-ear cress)).